Consider the following 2271-residue polypeptide: MGVPKRKASGGQDGAASSAGAAKRARKEELTGVRFKAQLKDPQGPGPGLEAFVSAAKKLPREDVYDVVEGYIKISVECVEIFQLLSGEKRPESETMLIFQVFEAILLRTASDLSHFHVVGTNIVKKLMNNHMKLICESLYASGYRLARACLSLMTAMVTQGPEAARDVCSHFDLNKKTLYTLVTKRDSKGVYDVRQAYVQFALSFLIAGDDSTIVQVLEVKEFIPCIFSSGIKEDRISTINILLSTLKTKVVHNKNITKTQKVRFFTGQLLNHIASLYNWNGITDVNPENVKVSAEEAGKTMVRELVHNFLMDLCCSLKHGINFYDASLGTFGRGGNLTLLHFLLGLKTAADDDLVADLVVNILKVCPDLLNKYFKEVTFSFIPRAKSTWLNNIKLLNKIYEAQPEISRAFQTREFIPLPRLLAMVMVTTVPLVCNKSMFTQALNLDSTSVRHTALSLISVILKRALKTVDHCLNKEVWQESGVYTAVMMEEFVQLFREALSKILPDLNTVVWVWQSLKKQETKQDDKKGQKRSDGPPAACDAHQCDDAETILLKAVLLQVICLYQKVVPHVVMQYNFDFSKLLKGVISEQGLREEVPPILQHHMLKVALELPASKFLWLKAQEGPDAEIIGGERSVFYLLMKMFVTSSHLQLKSLTKLLIMKILRDTGVFEHTWKELELWLEHLENTMEEDKETVIQFLERILLTLVANPYSYTDKASDFVQEASMLQATMTKQEADDMSIPISHIDDVLDMVDVLVEGSEGLDEEIGFTLSEDMILLTFPFSAVVPAALEARNKLLLGTGNEAAENVVTYLTAVLTDLLHTQRDPLALCLLLQAYDKLEPPCLVPCCQQLSRFNRYYSLWIPEQAREAWLLQAQGSPSPPALPLASSFTALLQAAYESQALRDEHIQVQLQATMPHLSMQQVLLAAKQVLLYLRSTVENFGQLGRSVGPPLLQLFLDLLRRLVVHCEQLDAQNQQRCEAARAEADLFLDMESVASLELANDQTLEEVLVAILRHPTLEGWFLALEQQALPPHTLSPVLVKLLATHFSAGVLQLLAASAPILQNIGQLGLLARYSEAITQSVLKELQNRRAGPATSPPKTPPQLEALQELHPYMEGAQLREVTLALLSLPETHLVTQQPTKSPGKERHLNALGKTLVQLLTCSPQDQLQSGELLWSSEYVRGLGALLPTLAVDELDTVLLHTLQRDPVLAPAVGADLLDYCLARRTQAALSIAALLLQESCTHLLWFEQWCLQAGPGLGLQGDLDDFLPLIHVYLQCRTRSHFTRPAGVSSAVIPVLRKTLWRQLQSRLLSTDSPPASGLYQEILAQLVPFARAKDLSVLMDRLPSLLHTPSSHKRWIVADSISAALEGSAEELCAWRRTLLESCVKWLIVSFSGGQQDDDNTQNQEKEMLLRLNALLHALNEVDPGDWQKFVKKGLKFRYQDHTFLKMLLTAVQLLYSPESSVRTKLIQLPVVYVMLMQHSLFLPTLLTSDGEESPDSQVKEALVDLMLTVVEMCPSVCESSHFAVLLGAYGATLSVLDQKILLLLRAYEQNKLSLINFRVLLWGPAAVEHHKTCRSLGRSLWQQPSVGDILRLLDRDRMMQTILHFPQNRRLLPPEDTQELIFKDKSRVDLDGLYDPCFLLQLFSELTRPEFVVDCRKFLDSNALGLTVTALSSYDPQMRAIAYHVLAAYYSHLEGARFQEQSQLLYLLDVVRNGIRTQDMRLTFTLALFIAKAALQILKPEEHMYLKVSNFLLSHEYLNMDKVPGFYQFFYSSDFEQKTEQKWVFGVLRQGIRDKQCYELCARRGIFHIILSFFHSPLCDEAAQNWILEILQNAAQVARSAYEIIRDYSLLTWILHILESKFLETPLLSNVISLLHTLWVTNLGDKAVEWESQRLCQPSSQEPAKRLALHLVNEFLYVLIVLMKHLRPTLAPVQLTNFFGTLDSVLRYRATVIQAFRDMNRFTVNETVLSTKDVLVLLHKWSLIERDLKLQEDLRAAIEKAQARELMKMLKDKNKPVMPARAKGPRGRKRRPGEAEEMADPELMASTLETCKGLLRSILTYWRPVIPGPDPTQEPVDSASPESDAPGPVYAAASLAVSWVLRSVAEHPLSRAEAAGLIGWLKSHILPHPVVVADLLKDSAVRSSIFRLYSRLCGAEGLAGPVQEVACLFNTVMLQLVAAQGRAGSPFHPAMEALSLSSLSEKDEATQASAAFLVSLYIKDIWLGAQRPDTLLTHVRMVCEAADDAPSSEEEAIVVLCKDAASAASDA.

The tract at residues 1–43 is disordered; sequence MGVPKRKASGGQDGAASSAGAAKRARKEELTGVRFKAQLKDPQ. Phosphoserine is present on residues serine 17 and serine 1143. A disordered region spans residues 2021-2042; sequence VMPARAKGPRGRKRRPGEAEEM.

It is found in the nucleus. The protein resides in the nucleolus. This Homo sapiens (Human) protein is Nucleolar pre-ribosomal-associated protein 1 (URB1).